Consider the following 76-residue polypeptide: Small ribosomal subunit protein bS18 (76 aa).

It belongs to the bacterial ribosomal protein bS18 family. In terms of assembly, part of the 30S ribosomal subunit. Forms a tight heterodimer with protein bS6.

Binds as a heterodimer with protein bS6 to the central domain of the 16S rRNA, where it helps stabilize the platform of the 30S subunit. This is Small ribosomal subunit protein bS18 from Symbiobacterium thermophilum (strain DSM 24528 / JCM 14929 / IAM 14863 / T).